Reading from the N-terminus, the 201-residue chain is Methylated-DNA--protein-cysteine methyltransferase (201 aa).

Positions 131, 132, and 146 each coordinate DNA. Cysteine 163 functions as the Nucleophile; methyl group acceptor in the catalytic mechanism.

It belongs to the MGMT family.

The protein localises to the nucleus. The catalysed reaction is a 6-O-methyl-2'-deoxyguanosine in DNA + L-cysteinyl-[protein] = S-methyl-L-cysteinyl-[protein] + a 2'-deoxyguanosine in DNA. It catalyses the reaction a 4-O-methyl-thymidine in DNA + L-cysteinyl-[protein] = a thymidine in DNA + S-methyl-L-cysteinyl-[protein]. Functionally, involved in the cellular defense against the biological effects of O6-methylguanine (O6-MeG) and O4-methylthymine (O4-MeT) in DNA. Repairs the methylated nucleobase in DNA by stoichiometrically transferring the methyl group to a cysteine residue in the enzyme. This is a suicide reaction: the enzyme is irreversibly inactivated. The chain is Methylated-DNA--protein-cysteine methyltransferase (MGT1) from Lodderomyces elongisporus (strain ATCC 11503 / CBS 2605 / JCM 1781 / NBRC 1676 / NRRL YB-4239) (Yeast).